Reading from the N-terminus, the 542-residue chain is 4-coumarate--CoA ligase 2 (542 aa).

Residues Ser-189, Ser-190, Gly-191, Thr-192, Thr-193, and Lys-197 each contribute to the ATP site. Tyr-239 and Ser-243 together coordinate (E)-4-coumaroyl-AMP. Residues Tyr-239 and Ser-243 each coordinate (E)-caffeoyl-AMP. Positions 239 and 243 each coordinate (E)-feruloyl-AMP. Lys-260 serves as a coordination point for CoA. The SBD1 stretch occupies residues 262 to 331 (DIVSFLELIQ…AKFPNAKLGQ (70 aa)). A (E)-4-coumaroyl-AMP-binding site is contributed by Ala-309. Ala-309 serves as a coordination point for (E)-caffeoyl-AMP. A (E)-feruloyl-AMP-binding site is contributed by Ala-309. Residues Gln-331, Gly-332, and Thr-336 each coordinate ATP. Gly-332, Thr-336, Met-344, Asp-420, Arg-435, Lys-437, and Lys-441 together coordinate (E)-4-coumaroyl-AMP. (E)-caffeoyl-AMP is bound by residues Gly-332, Thr-336, Met-344, Asp-420, Arg-435, Lys-437, and Lys-441. Gly-332, Thr-336, Met-344, Asp-420, Arg-435, Lys-437, and Lys-441 together coordinate (E)-feruloyl-AMP. 2 residues coordinate AMP: Gly-332 and Thr-336. An SBD2 region spans residues 332 to 399 (GYGMTEAGPV…IRGDQIMKGY (68 aa)). Positions 420 and 435 each coordinate ATP. AMP is bound at residue Asp-420. AMP is bound by residues Lys-437 and Lys-441. Lys-443 and Gly-444 together coordinate CoA. Residue Gln-446 participates in AMP binding. Residue Lys-526 participates in ATP binding.

The protein belongs to the ATP-dependent AMP-binding enzyme family. Mg(2+) is required as a cofactor. Mainly expressed in old stems and, to a lower extent, in flowers (e.g. in ovary), leaves, young stems, shoot tips and patel limbs.

The enzyme catalyses (E)-4-coumarate + ATP + CoA = (E)-4-coumaroyl-CoA + AMP + diphosphate. It carries out the reaction (E)-caffeate + ATP + CoA = (E)-caffeoyl-CoA + AMP + diphosphate. The catalysed reaction is (E)-ferulate + ATP + CoA = (E)-feruloyl-CoA + AMP + diphosphate. It catalyses the reaction (E)-cinnamate + ATP + CoA = (E)-cinnamoyl-CoA + AMP + diphosphate. The enzyme catalyses (E)-4-coumarate + ATP + H(+) = (E)-4-coumaroyl-AMP + diphosphate. It carries out the reaction (E)-4-coumaroyl-AMP + CoA = (E)-4-coumaroyl-CoA + AMP + H(+). The catalysed reaction is (E)-caffeate + ATP + H(+) = (E)-caffeoyl-AMP + diphosphate. It catalyses the reaction (E)-caffeoyl-AMP + CoA = (E)-caffeoyl-CoA + AMP + H(+). The enzyme catalyses (E)-ferulate + ATP + H(+) = (E)-feruloyl-AMP + diphosphate. It carries out the reaction (E)-feruloyl-AMP + CoA = (E)-feruloyl-CoA + AMP + H(+). Its pathway is phytoalexin biosynthesis; 3,4',5-trihydroxystilbene biosynthesis; 3,4',5-trihydroxystilbene from trans-4-coumarate: step 1/2. In terms of biological role, major enzyme of the phenylpropanoid pathway that mediates the production of several precursors for numerous metabolites and regulates carbon flow. Catalyzes the formation of CoA thioesters using 4-coumarate, ferulate, caffeate, and cinnamate as substrates. Follows a two-step reaction mechanism, wherein a (hydroxy)cinnamate substrate first undergoes adenylation by ATP leading to an acyl-AMP, followed by a thioesterification in the presence of CoA to yield the final (hydroxy)cinnamoyl-CoA product. Almost inactive toward sinapate. This is 4-coumarate--CoA ligase 2 from Nicotiana tabacum (Common tobacco).